The sequence spans 557 residues: MATSSAWKLDDHPKLPKGKTIAVIVLDGWGESAPDQYNCIHNAPTPAMDSLKHGAPDTWTLIKAHGTAVGLPSEDDMGNSEVGHNALGAGRIFAQGAKLCDQALASGKIFEGEGFKYVSESFETNTLHLVGLLSDGGVHSRLDQLQLLIKGSAERGAKRIRVHILTDGRDVLDGSSVGFVETLEADLVALRENGVDAQIASGGGRMYVTLDRYENDWEVVKRGWDAQVLGEAPHKFKNAVEAVKTLRKEPGANDQYLPPFVIVDESGKAVGPIVDGDAVVTFNFRADRMVMHAKALEYEDFDKFDRVRYPKIRYAGMLQYDGELKLPSRYLVSPPEIDRTSGEYLTHNGVSTFACSETVKFGHVTFFWNGNRSGYFNEKLEEYVEIPSDSGISFNVQPKMKALEIGEKARDAILSGKFDQVRVNIPNGDMVGHTGDIEATVVACEAADLAVKMIFDAIEQVKGIYVVTADHGNAEDMVKRDKSGKPALDKEGKLQILTSHTLKPVPIAIGGPGLAQGVRFRKDLETPGLANVAATVMNLHGFVAPSDYEPTLIEVVE.

Asp27 and Ser80 together coordinate Mn(2+). The Phosphoserine intermediate role is filled by Ser80. Residues His139, 169-170 (RD), Arg205, Arg212, 285-288 (RADR), and Lys360 each bind substrate. Mn(2+)-binding residues include Asp429, His433, Asp470, His471, and His500.

Belongs to the BPG-independent phosphoglycerate mutase family. As to quaternary structure, monomer. Mn(2+) is required as a cofactor.

It is found in the cytoplasm. The catalysed reaction is (2R)-2-phosphoglycerate = (2R)-3-phosphoglycerate. The protein operates within carbohydrate degradation; glycolysis; pyruvate from D-glyceraldehyde 3-phosphate: step 3/5. In terms of biological role, catalyzes the interconversion of 2-phosphoglycerate (2-PGA) and 3-phosphoglycerate (3-PGA). Required for guard cell function (e.g. blue light-, abscisic acid- (ABA), and low CO(2)-regulated stomatal movements) and fertility (e.g. pollen grains production). This chain is 2,3-bisphosphoglycerate-independent phosphoglycerate mutase 1 (PGM1), found in Arabidopsis thaliana (Mouse-ear cress).